The sequence spans 719 residues: Phosphoribosylformylglycinamidine synthase subunit PurL (719 aa).

Residue His-47 is part of the active site. The ATP site is built by Tyr-50 and Lys-89. A Mg(2+)-binding site is contributed by Glu-91. Residues 92–95 (SHNH) and Arg-114 contribute to the substrate site. Catalysis depends on His-93, which acts as the Proton acceptor. Asp-115 provides a ligand contact to Mg(2+). Gln-238 is a binding site for substrate. Asp-266 is a Mg(2+) binding site. 310 to 312 (ESQ) contacts substrate. ATP is bound by residues Asp-488 and Gly-525. Mg(2+) is bound at residue Asn-526. Ser-528 serves as a coordination point for substrate.

It belongs to the FGAMS family. Monomer. Part of the FGAM synthase complex composed of 1 PurL, 1 PurQ and 2 PurS subunits.

It is found in the cytoplasm. It carries out the reaction N(2)-formyl-N(1)-(5-phospho-beta-D-ribosyl)glycinamide + L-glutamine + ATP + H2O = 2-formamido-N(1)-(5-O-phospho-beta-D-ribosyl)acetamidine + L-glutamate + ADP + phosphate + H(+). It participates in purine metabolism; IMP biosynthesis via de novo pathway; 5-amino-1-(5-phospho-D-ribosyl)imidazole from N(2)-formyl-N(1)-(5-phospho-D-ribosyl)glycinamide: step 1/2. Functionally, part of the phosphoribosylformylglycinamidine synthase complex involved in the purines biosynthetic pathway. Catalyzes the ATP-dependent conversion of formylglycinamide ribonucleotide (FGAR) and glutamine to yield formylglycinamidine ribonucleotide (FGAM) and glutamate. The FGAM synthase complex is composed of three subunits. PurQ produces an ammonia molecule by converting glutamine to glutamate. PurL transfers the ammonia molecule to FGAR to form FGAM in an ATP-dependent manner. PurS interacts with PurQ and PurL and is thought to assist in the transfer of the ammonia molecule from PurQ to PurL. The protein is Phosphoribosylformylglycinamidine synthase subunit PurL of Jannaschia sp. (strain CCS1).